The following is a 390-amino-acid chain: tRNA (guanine(26)-N(2))-dimethyltransferase (390 aa).

The Trm1 methyltransferase domain maps to 4–378 (HIIEEGLVKI…MPLDELKQLI (375 aa)). S-adenosyl-L-methionine contacts are provided by R37, R67, D85, D112, and A113. Positions 245, 248, 265, and 268 each coordinate Zn(2+).

Belongs to the class I-like SAM-binding methyltransferase superfamily. Trm1 family.

The catalysed reaction is guanosine(26) in tRNA + 2 S-adenosyl-L-methionine = N(2)-dimethylguanosine(26) in tRNA + 2 S-adenosyl-L-homocysteine + 2 H(+). In terms of biological role, dimethylates a single guanine residue at position 26 of a number of tRNAs using S-adenosyl-L-methionine as donor of the methyl groups. The sequence is that of tRNA (guanine(26)-N(2))-dimethyltransferase from Methanosphaera stadtmanae (strain ATCC 43021 / DSM 3091 / JCM 11832 / MCB-3).